Here is a 333-residue protein sequence, read N- to C-terminus: Transcription initiation factor IIB (333 aa).

A TFIIB-type zinc finger spans residues 33-64 (EIYRCPICGNDRFVYNYERGEVVCIVCGAVVQ). Zn(2+) is bound by residues C37, C40, C56, and C59. 2 consecutive repeat copies span residues 149–232 (QELE…LREL) and 243–324 (LYIS…ELAK).

This sequence belongs to the TFIIB family.

In terms of biological role, stabilizes TBP binding to an archaeal box-A promoter. Also responsible for recruiting RNA polymerase II to the pre-initiation complex (DNA-TBP-TFIIB). This is Transcription initiation factor IIB from Pyrobaculum arsenaticum (strain DSM 13514 / JCM 11321 / PZ6).